Here is a 264-residue protein sequence, read N- to C-terminus: 3-methyl-2-oxobutanoate hydroxymethyltransferase (264 aa).

Asp45 and Asp84 together coordinate Mg(2+). 3-methyl-2-oxobutanoate-binding positions include 45–46, Asp84, and Lys112; that span reads DS. Residue Glu114 participates in Mg(2+) binding. Residue Glu181 is the Proton acceptor of the active site.

Belongs to the PanB family. Homodecamer; pentamer of dimers. Requires Mg(2+) as cofactor.

The protein localises to the cytoplasm. It catalyses the reaction 3-methyl-2-oxobutanoate + (6R)-5,10-methylene-5,6,7,8-tetrahydrofolate + H2O = 2-dehydropantoate + (6S)-5,6,7,8-tetrahydrofolate. Its pathway is cofactor biosynthesis; (R)-pantothenate biosynthesis; (R)-pantoate from 3-methyl-2-oxobutanoate: step 1/2. Functionally, catalyzes the reversible reaction in which hydroxymethyl group from 5,10-methylenetetrahydrofolate is transferred onto alpha-ketoisovalerate to form ketopantoate. This chain is 3-methyl-2-oxobutanoate hydroxymethyltransferase, found in Escherichia coli O8 (strain IAI1).